The following is a 226-amino-acid chain: MKLGLVAGMLAVCFSFSSVAMTLKLTPEIDLLVVDGKNMSGSLLKGADSLELNSGMHQILFKVIKPLPTDPLVLYSSPPLIVVFNAHNTRSVAIKLPVINTLRDGHQFSKNPLYQLIGDNGHPLSVRHDVLRQDHLNNSTTLETVMAAYNVGKYNASVPAFAAIPPSPVSAVPGTTIPVAGVNTPHKTASLQGENVTEQMLQYWFLQANPETQKRFLIWAKKQPIH.

Residues 1-20 form the signal peptide; the sequence is MKLGLVAGMLAVCFSFSSVA.

This sequence belongs to the UPF0319 family.

In Yersinia pestis, this protein is UPF0319 protein YPO1442/y2728/YP_1333.